Consider the following 435-residue polypeptide: UDP-N-acetylmuramoylalanine--D-glutamate ligase (435 aa).

Residue 114–120 (GSNGKST) participates in ATP binding.

It belongs to the MurCDEF family.

It is found in the cytoplasm. It catalyses the reaction UDP-N-acetyl-alpha-D-muramoyl-L-alanine + D-glutamate + ATP = UDP-N-acetyl-alpha-D-muramoyl-L-alanyl-D-glutamate + ADP + phosphate + H(+). The protein operates within cell wall biogenesis; peptidoglycan biosynthesis. Its function is as follows. Cell wall formation. Catalyzes the addition of glutamate to the nucleotide precursor UDP-N-acetylmuramoyl-L-alanine (UMA). The sequence is that of UDP-N-acetylmuramoylalanine--D-glutamate ligase from Haemophilus ducreyi (strain 35000HP / ATCC 700724).